Here is a 295-residue protein sequence, read N- to C-terminus: Diaminopimelate epimerase (295 aa).

2 residues coordinate substrate: Asn-11 and Asn-67. Catalysis depends on Cys-76, which acts as the Proton donor. Substrate is bound by residues 77-78 (GN), Asn-171, Asn-210, and 228-229 (ER). The active-site Proton acceptor is the Cys-237. 238-239 (GT) contributes to the substrate binding site.

The protein belongs to the diaminopimelate epimerase family. In terms of assembly, homodimer.

It localises to the cytoplasm. It catalyses the reaction (2S,6S)-2,6-diaminopimelate = meso-2,6-diaminopimelate. Its pathway is amino-acid biosynthesis; L-lysine biosynthesis via DAP pathway; DL-2,6-diaminopimelate from LL-2,6-diaminopimelate: step 1/1. Functionally, catalyzes the stereoinversion of LL-2,6-diaminopimelate (L,L-DAP) to meso-diaminopimelate (meso-DAP), a precursor of L-lysine. The polypeptide is Diaminopimelate epimerase (Methanocaldococcus jannaschii (strain ATCC 43067 / DSM 2661 / JAL-1 / JCM 10045 / NBRC 100440) (Methanococcus jannaschii)).